The primary structure comprises 617 residues: MERIDTTGRLSRLRELMKERNVDVYVIPSEDSHASEYIAGCDARREFISGFSGSAGCAVVTLDKAALATDGRYFNQASKQLDQNWLLLKQGLQDVPTWQEWSAEQSAGGKVVGVDPELITGSIAKKLTEKVKRSGGSDLVPLDENLVDLVWAEARPARPKNPIKVLPEKFSGKDVKTKLKELRQELDRKNSRAFVVSMLDEIAWLFNLRGDDIPYNPVFFSYAIITSDSATLYVDASKLGEETRAYLADNDVCVKPYDIVFDSINTLRSSDTSCQTTSGVSSKRFMISTKASWALKRSLGGDSQVDEVRSPIGDSKAVKNKSEMAGMRACHIRDGAALIEYFAWLEDQLVAKKVKLDEVQAADKLEQLRSKQKDYVGLSFDTISSTGANAAVIHYKPERGACSIIDPTAIYLCDSGAQYLDGTTDTTRTLHFGQPTEAEKLAYTLVLKGNIALDTAIFPKGTTGFAIDCLARQHLWKEGLDYRHGTGHGVGSYLNVHEGPIGIGTRVQFAEVALAPGNVLSIEPGFYEDGSYGIRIENVAMVTEVKTKHSFGDKPYLGFEHVTMVPYCRNLIEPNLLTAEEKAWLNAHHADILQKTKGYFQDDPLTMTWLARETQPL.

4 residues coordinate Mn(2+): aspartate 414, aspartate 425, glutamate 523, and glutamate 537.

This sequence belongs to the peptidase M24B family. Requires Mn(2+) as cofactor.

It carries out the reaction Release of any N-terminal amino acid, including proline, that is linked to proline, even from a dipeptide or tripeptide.. Its function is as follows. Catalyzes the removal of a penultimate prolyl residue from the N-termini of peptides. The polypeptide is Probable Xaa-Pro aminopeptidase P (AMPP) (Colletotrichum graminicola (strain M1.001 / M2 / FGSC 10212) (Maize anthracnose fungus)).